We begin with the raw amino-acid sequence, 61 residues long: Large ribosomal subunit protein bL32 (61 aa).

Residues 1–16 (MAVPKRKTSPSKRGMR) are compositionally biased toward basic residues. The interval 1 to 35 (MAVPKRKTSPSKRGMRRSADGLKSATYVEDKNSGE) is disordered.

This sequence belongs to the bacterial ribosomal protein bL32 family.

The polypeptide is Large ribosomal subunit protein bL32 (Agrobacterium fabrum (strain C58 / ATCC 33970) (Agrobacterium tumefaciens (strain C58))).